We begin with the raw amino-acid sequence, 35 residues long: Photosystem II reaction center protein T (35 aa).

A helical membrane pass occupies residues A3 to F23.

Belongs to the PsbT family. PSII is composed of 1 copy each of membrane proteins PsbA, PsbB, PsbC, PsbD, PsbE, PsbF, PsbH, PsbI, PsbJ, PsbK, PsbL, PsbM, PsbT, PsbY, PsbZ, Psb30/Ycf12, at least 3 peripheral proteins of the oxygen-evolving complex and a large number of cofactors. It forms dimeric complexes.

It is found in the plastid. Its subcellular location is the chloroplast thylakoid membrane. Functionally, found at the monomer-monomer interface of the photosystem II (PS II) dimer, plays a role in assembly and dimerization of PSII. PSII is a light-driven water plastoquinone oxidoreductase, using light energy to abstract electrons from H(2)O, generating a proton gradient subsequently used for ATP formation. The chain is Photosystem II reaction center protein T from Gossypium barbadense (Sea Island cotton).